Here is a 682-residue protein sequence, read N- to C-terminus: DNA ligase (682 aa).

Residues 38-42, 87-88, and E119 each bind NAD(+); these read DAEYD and SI. The active-site N6-AMP-lysine intermediate is the K121. NAD(+)-binding residues include R142, E181, K298, and K322. Residues C416, C419, C434, and C439 each coordinate Zn(2+). One can recognise a BRCT domain in the interval 601 to 682; sequence GHEMPLAGKT…LLSLLEPGER (82 aa).

It belongs to the NAD-dependent DNA ligase family. LigA subfamily. Mg(2+) is required as a cofactor. It depends on Mn(2+) as a cofactor.

The catalysed reaction is NAD(+) + (deoxyribonucleotide)n-3'-hydroxyl + 5'-phospho-(deoxyribonucleotide)m = (deoxyribonucleotide)n+m + AMP + beta-nicotinamide D-nucleotide.. Functionally, DNA ligase that catalyzes the formation of phosphodiester linkages between 5'-phosphoryl and 3'-hydroxyl groups in double-stranded DNA using NAD as a coenzyme and as the energy source for the reaction. It is essential for DNA replication and repair of damaged DNA. This chain is DNA ligase, found in Desulfosudis oleivorans (strain DSM 6200 / JCM 39069 / Hxd3) (Desulfococcus oleovorans).